The following is a 1342-amino-acid chain: DNA-directed RNA polymerase subunit beta (1342 aa).

Belongs to the RNA polymerase beta chain family. The RNAP catalytic core consists of 2 alpha, 1 beta, 1 beta' and 1 omega subunit. When a sigma factor is associated with the core the holoenzyme is formed, which can initiate transcription.

It catalyses the reaction RNA(n) + a ribonucleoside 5'-triphosphate = RNA(n+1) + diphosphate. DNA-dependent RNA polymerase catalyzes the transcription of DNA into RNA using the four ribonucleoside triphosphates as substrates. This is DNA-directed RNA polymerase subunit beta from Shewanella amazonensis (strain ATCC BAA-1098 / SB2B).